Here is a 163-residue protein sequence, read N- to C-terminus: Endoribonuclease YbeY (163 aa).

Positions 116, 120, and 126 each coordinate Zn(2+).

It belongs to the endoribonuclease YbeY family. The cofactor is Zn(2+).

It localises to the cytoplasm. Functionally, single strand-specific metallo-endoribonuclease involved in late-stage 70S ribosome quality control and in maturation of the 3' terminus of the 16S rRNA. The sequence is that of Endoribonuclease YbeY from Idiomarina loihiensis (strain ATCC BAA-735 / DSM 15497 / L2-TR).